We begin with the raw amino-acid sequence, 342 residues long: MDDGGHRENGRHKAAVQGQWLMQHQPSMKQVMSIIAERDAAIQERNLAISEKKAAVAERDMAFLQRDTAIAERNNAIMERDSALTALQYRENSMVTAPAANMSACPPGCQISRGVKHLHHPHMHHHHQQHHIPQLTENAYETREMEPNDGLPTSPPAGSTLESAKPKRGKRVNPKATTQTAANKRGPKNQRKVKKESEDDLNKIMFVKTTHDYTDEDSSKHILIGSKSDWKSQEMVGLNQVVYDETTMPPPVCSCTGVLRQCYKWGNGGWQSSCCTTTLSMYPLPALPNKRHARVGGRKMSGSAFNKLLSRLAAEGHHDLSNPVDLKDHWAKHGTNRYITIK.

The stretch at 41-67 (AIQERNLAISEKKAAVAERDMAFLQRD) forms a coiled coil. The interval 41–76 (AIQERNLAISEKKAAVAERDMAFLQRDTAIAERNNA) is alanine-zipper. Positions 143 to 199 (REMEPNDGLPTSPPAGSTLESAKPKRGKRVNPKATTQTAANKRGPKNQRKVKKESED) are disordered. Residues 164 to 195 (AKPKRGKRVNPKATTQTAANKRGPKNQRKVKK) form a required for nucleus and nucleolus localization region. Residues 185 to 194 (RGPKNQRKVK) show a composition bias toward basic residues. A Nuclear localization signal motif is present at residues 192-195 (KVKK).

This sequence belongs to the BBR/BPC family. Homodimer. Heterodimer with BPC4. Expressed in seedlings, leaves and pistils. Detected in the base of flowers and tips of carpels, in sepal vasculature, in young rosette, in the lateral and tip of primary roots, and in ovule at the exception of the outer integument.

Its subcellular location is the nucleus. The protein localises to the nucleolus. Its function is as follows. Transcriptional regulator that specifically binds to GA-rich elements (GAGA-repeats) present in regulatory sequences of genes involved in developmental processes. This is Protein BASIC PENTACYSTEINE6 (BPC6) from Arabidopsis thaliana (Mouse-ear cress).